An 89-amino-acid polypeptide reads, in one-letter code: Small ribosomal subunit protein uS15 (89 aa).

Belongs to the universal ribosomal protein uS15 family. In terms of assembly, part of the 30S ribosomal subunit. Forms a bridge to the 50S subunit in the 70S ribosome, contacting the 23S rRNA.

In terms of biological role, one of the primary rRNA binding proteins, it binds directly to 16S rRNA where it helps nucleate assembly of the platform of the 30S subunit by binding and bridging several RNA helices of the 16S rRNA. Its function is as follows. Forms an intersubunit bridge (bridge B4) with the 23S rRNA of the 50S subunit in the ribosome. The polypeptide is Small ribosomal subunit protein uS15 (Chloroherpeton thalassium (strain ATCC 35110 / GB-78)).